A 446-amino-acid chain; its full sequence is Methylenetetrahydrofolate--tRNA-(uracil-5-)-methyltransferase TrmFO (446 aa).

FAD is bound at residue 8–13 (GGGLAG).

This sequence belongs to the MnmG family. TrmFO subfamily. FAD is required as a cofactor.

Its subcellular location is the cytoplasm. It carries out the reaction uridine(54) in tRNA + (6R)-5,10-methylene-5,6,7,8-tetrahydrofolate + NADH + H(+) = 5-methyluridine(54) in tRNA + (6S)-5,6,7,8-tetrahydrofolate + NAD(+). The catalysed reaction is uridine(54) in tRNA + (6R)-5,10-methylene-5,6,7,8-tetrahydrofolate + NADPH + H(+) = 5-methyluridine(54) in tRNA + (6S)-5,6,7,8-tetrahydrofolate + NADP(+). Its function is as follows. Catalyzes the folate-dependent formation of 5-methyl-uridine at position 54 (M-5-U54) in all tRNAs. The sequence is that of Methylenetetrahydrofolate--tRNA-(uracil-5-)-methyltransferase TrmFO from Zymomonas mobilis subsp. mobilis (strain ATCC 31821 / ZM4 / CP4).